The following is a 117-amino-acid chain: Large ribosomal subunit protein bL19 (117 aa).

This sequence belongs to the bacterial ribosomal protein bL19 family.

Functionally, this protein is located at the 30S-50S ribosomal subunit interface and may play a role in the structure and function of the aminoacyl-tRNA binding site. This Shewanella denitrificans (strain OS217 / ATCC BAA-1090 / DSM 15013) protein is Large ribosomal subunit protein bL19.